Reading from the N-terminus, the 421-residue chain is Testin (421 aa).

The PET domain occupies 92–199; the sequence is MILTNPVAAK…GDVKLPYEMG (108 aa). The interval 133 to 164 is disordered; the sequence is EKQPVAGSEGAQYRKKQLAKQLPAHDQDPSKC. Basic and acidic residues predominate over residues 155–164; the sequence is PAHDQDPSKC. LIM zinc-binding domains lie at 234–297, 299–359, and 362–421; these read YFCY…CDSE, PRCA…NHAV, and QGCH…KMMS.

This sequence belongs to the prickle / espinas / testin family. In terms of assembly, interacts via LIM domain 1 with ZYX. Interacts (via LIM domain 3) with ENAH and VASP. Interacts with ALKBH4, talin, actin, alpha-actinin, GRIP1 and PXN. Interacts (via LIM domain 2) with ACTL7A (via N-terminus). Heterodimer with ACTL7A; the heterodimer interacts with ENAH to form a heterotrimer.

The protein localises to the cytoplasm. It localises to the cell junction. It is found in the focal adhesion. Scaffold protein that may play a role in cell adhesion, cell spreading and in the reorganization of the actin cytoskeleton. Plays a role in the regulation of cell proliferation. May act as a tumor suppressor. The polypeptide is Testin (TES) (Oryctolagus cuniculus (Rabbit)).